A 175-amino-acid polypeptide reads, in one-letter code: NADH-ubiquinone oxidoreductase chain 6 (175 aa).

Transmembrane regions (helical) follow at residues 1–21, 25–45, 47–67, 88–108, and 149–169; these read MMTY…VGFS, SPIY…GIVL, FGGS…MLVV, AVLG…CYIL, and YGTW…LVIM.

It belongs to the complex I subunit 6 family. In terms of assembly, core subunit of respiratory chain NADH dehydrogenase (Complex I) which is composed of 45 different subunits.

It localises to the mitochondrion inner membrane. The enzyme catalyses a ubiquinone + NADH + 5 H(+)(in) = a ubiquinol + NAD(+) + 4 H(+)(out). Functionally, core subunit of the mitochondrial membrane respiratory chain NADH dehydrogenase (Complex I) which catalyzes electron transfer from NADH through the respiratory chain, using ubiquinone as an electron acceptor. Essential for the catalytic activity and assembly of complex I. The sequence is that of NADH-ubiquinone oxidoreductase chain 6 (MT-ND6) from Phoca vitulina (Harbor seal).